The sequence spans 151 residues: Ribosome maturation factor RimP (151 aa).

The protein belongs to the RimP family.

The protein resides in the cytoplasm. Required for maturation of 30S ribosomal subunits. The polypeptide is Ribosome maturation factor RimP (Desulfotalea psychrophila (strain LSv54 / DSM 12343)).